A 224-amino-acid chain; its full sequence is Ribosomal RNA small subunit methyltransferase G (224 aa).

S-adenosyl-L-methionine contacts are provided by residues Gly89, Leu94, 140–141 (IE), and Arg154.

The protein belongs to the methyltransferase superfamily. RNA methyltransferase RsmG family.

It localises to the cytoplasm. The catalysed reaction is guanosine(527) in 16S rRNA + S-adenosyl-L-methionine = N(7)-methylguanosine(527) in 16S rRNA + S-adenosyl-L-homocysteine. In terms of biological role, specifically methylates the N7 position of guanine in position 527 of 16S rRNA. This is Ribosomal RNA small subunit methyltransferase G from Bordetella avium (strain 197N).